The sequence spans 1400 residues: DNA-directed RNA polymerase subunit beta' (1400 aa).

Residues Cys71, Cys73, Cys86, and Cys89 each contribute to the Zn(2+) site. 3 residues coordinate Mg(2+): Asp462, Asp464, and Asp466. The Zn(2+) site is built by Cys811, Cys885, Cys892, and Cys895.

Belongs to the RNA polymerase beta' chain family. The RNAP catalytic core consists of 2 alpha, 1 beta, 1 beta' and 1 omega subunit. When a sigma factor is associated with the core the holoenzyme is formed, which can initiate transcription. It depends on Mg(2+) as a cofactor. Zn(2+) serves as cofactor.

It catalyses the reaction RNA(n) + a ribonucleoside 5'-triphosphate = RNA(n+1) + diphosphate. DNA-dependent RNA polymerase catalyzes the transcription of DNA into RNA using the four ribonucleoside triphosphates as substrates. The sequence is that of DNA-directed RNA polymerase subunit beta' from Brucella ovis (strain ATCC 25840 / 63/290 / NCTC 10512).